The primary structure comprises 300 residues: Merozoite surface protein 2 (300 aa).

The N-terminal stretch at 1–20 is a signal peptide; the sequence is MKVIKTLSIINFFIFVTFNI. 2 N-linked (GlcNAc...) asparagine glycosylation sites follow: asparagine 22 and asparagine 36. Positions 44-226 are polymorphic region; it reads EESKPPTGAV…EQTESPELQS (183 aa). A 1; inverted repeat occupies 51-58; the sequence is GAVAGSGA. Residues 51 to 74 are 7 X 8 AA tandem repeats of G-S-G-A-G-A-V-A; that stretch reads GAVAGSGAGAGSGAGAVAGSGAGA. A run of 5 repeats spans residues 61–68, 69–76, 77–84, 85–92, and 93–100. The 7; inverted repeat unit spans residues 103-110; sequence GAVAGSGA. The tract at residues 111–261 is disordered; it reads GNGANPGADA…DSQKECTDGN (151 aa). Positions 124–148 are enriched in low complexity; the sequence is PSTPATTTTTTTTNDAEASTSTSSE. Basic and acidic residues predominate over residues 149–165; sequence NRNHNNAETNPKGKGEV. Polar residues-rich tracts occupy residues 167–193 and 200–228; these read KPNQ…NVPR and KSPT…QSAP. N-linked (GlcNAc...) asparagine glycosylation is present at asparagine 177. Asparagine 249 carries an N-linked (GlcNAc...) asparagine glycan. A disulfide bridge links cysteine 257 with cysteine 265. Asparagine 273 and asparagine 274 each carry an N-linked (GlcNAc...) asparagine glycan. Residue asparagine 274 is the site of GPI-anchor amidated asparagine attachment. A propeptide spans 275 to 300 (removed in mature form); that stretch reads SSNIASINKFVVLISATLVLSFAIFI.

The protein resides in the cell membrane. Its function is as follows. May play a role in the merozoite attachment to the erythrocyte. The sequence is that of Merozoite surface protein 2 from Plasmodium falciparum (isolate mad71 / Papua New Guinea).